Here is a 347-residue protein sequence, read N- to C-terminus: Doublecortin domain-containing protein 2C (347 aa).

Doublecortin domains are found at residues 16–98 (KTIL…LDYI) and 136–217 (RYIN…IPYW). The interval 235–260 (KYTQTKKRVESKVKEPLQNDSVPPRS) is disordered. Residues 241–251 (KRVESKVKEPL) show a composition bias toward basic and acidic residues.

It localises to the cell projection. The protein localises to the cilium. It is found in the flagellum. Its subcellular location is the cytoplasm. This Mus musculus (Mouse) protein is Doublecortin domain-containing protein 2C.